A 387-amino-acid polypeptide reads, in one-letter code: Alkanesulfonate monooxygenase (387 aa).

The tract at residues 365–387 (HNSGPFGETVGNDYRPSRLASQS) is disordered.

The protein belongs to the SsuD family.

The catalysed reaction is an alkanesulfonate + FMNH2 + O2 = an aldehyde + FMN + sulfite + H2O + 2 H(+). Its function is as follows. Catalyzes the desulfonation of aliphatic sulfonates. The polypeptide is Alkanesulfonate monooxygenase (Bradyrhizobium diazoefficiens (strain JCM 10833 / BCRC 13528 / IAM 13628 / NBRC 14792 / USDA 110)).